Reading from the N-terminus, the 135-residue chain is ATP synthase epsilon chain (135 aa).

This sequence belongs to the ATPase epsilon chain family. F-type ATPases have 2 components, CF(1) - the catalytic core - and CF(0) - the membrane proton channel. CF(1) has five subunits: alpha(3), beta(3), gamma(1), delta(1), epsilon(1). CF(0) has three main subunits: a, b and c.

The protein localises to the cell inner membrane. Produces ATP from ADP in the presence of a proton gradient across the membrane. In Granulibacter bethesdensis (strain ATCC BAA-1260 / CGDNIH1), this protein is ATP synthase epsilon chain.